The sequence spans 364 residues: MQDRQKAQDYRAILLADTPLIDVRAPIEFEQGAMPGAINLPLMMDDERAAVGTCYKRQGADAALALGHRLVCGDIRQQRLEAWKAAYQRFPNGYLCCARGGQRSHIVQRWLQETGIDCPLIEGGYKALRQTAIQATWQLAQKPILLIGGCTGSGKTQLVRQQPNGVDLEGLARHRGSSFGRTLNPQLSQASFENKLAVELLKINARQTLKRWVLEDEGRTIGANHLPECLRERMAQAPIAVVEDPFALRLERLREEYFIRMHHDFTHAYGDEAGWQAYSEYLHHGLFAIRRRLGLQRFAELTDTLDRALAEQLSSGSTDGHMAWLVPLLNEYYDPMYRYQLEKKAANIVFRGPWQDVANWLKAQ.

One can recognise a Rhodanese domain in the interval 14–137; that stretch reads LLADTPLIDV…LRQTAIQATW (124 aa). Cysteine 97 functions as the S-selanylcysteine intermediate in the catalytic mechanism.

This sequence belongs to the SelU family. Monomer.

The catalysed reaction is 5-methylaminomethyl-2-thiouridine(34) in tRNA + selenophosphate + (2E)-geranyl diphosphate + H2O + H(+) = 5-methylaminomethyl-2-selenouridine(34) in tRNA + (2E)-thiogeraniol + phosphate + diphosphate. It catalyses the reaction 5-methylaminomethyl-2-thiouridine(34) in tRNA + (2E)-geranyl diphosphate = 5-methylaminomethyl-S-(2E)-geranyl-thiouridine(34) in tRNA + diphosphate. It carries out the reaction 5-methylaminomethyl-S-(2E)-geranyl-thiouridine(34) in tRNA + selenophosphate + H(+) = 5-methylaminomethyl-2-(Se-phospho)selenouridine(34) in tRNA + (2E)-thiogeraniol. The enzyme catalyses 5-methylaminomethyl-2-(Se-phospho)selenouridine(34) in tRNA + H2O = 5-methylaminomethyl-2-selenouridine(34) in tRNA + phosphate. Functionally, involved in the post-transcriptional modification of the uridine at the wobble position (U34) of tRNA(Lys), tRNA(Glu) and tRNA(Gln). Catalyzes the conversion of 2-thiouridine (S2U-RNA) to 2-selenouridine (Se2U-RNA). Acts in a two-step process involving geranylation of 2-thiouridine (S2U) to S-geranyl-2-thiouridine (geS2U) and subsequent selenation of the latter derivative to 2-selenouridine (Se2U) in the tRNA chain. This Salmonella dublin (strain CT_02021853) protein is tRNA 2-selenouridine synthase.